A 295-amino-acid chain; its full sequence is Ribosomal RNA small subunit methyltransferase H (295 aa).

S-adenosyl-L-methionine is bound by residues 36–38 (GGH), D56, L90, D104, and H111.

Belongs to the methyltransferase superfamily. RsmH family.

Its subcellular location is the cytoplasm. The enzyme catalyses cytidine(1402) in 16S rRNA + S-adenosyl-L-methionine = N(4)-methylcytidine(1402) in 16S rRNA + S-adenosyl-L-homocysteine + H(+). Its function is as follows. Specifically methylates the N4 position of cytidine in position 1402 (C1402) of 16S rRNA. The protein is Ribosomal RNA small subunit methyltransferase H of Dictyoglomus turgidum (strain DSM 6724 / Z-1310).